The sequence spans 130 residues: Ribosome-binding factor A (130 aa).

The protein belongs to the RbfA family. Monomer. Binds 30S ribosomal subunits, but not 50S ribosomal subunits or 70S ribosomes.

It localises to the cytoplasm. Functionally, one of several proteins that assist in the late maturation steps of the functional core of the 30S ribosomal subunit. Associates with free 30S ribosomal subunits (but not with 30S subunits that are part of 70S ribosomes or polysomes). Required for efficient processing of 16S rRNA. May interact with the 5'-terminal helix region of 16S rRNA. In Roseiflexus sp. (strain RS-1), this protein is Ribosome-binding factor A.